The sequence spans 503 residues: Aspartyl/glutamyl-tRNA(Asn/Gln) amidotransferase subunit B (503 aa).

The protein belongs to the GatB/GatE family. GatB subfamily. In terms of assembly, heterotrimer of A, B and C subunits.

It carries out the reaction L-glutamyl-tRNA(Gln) + L-glutamine + ATP + H2O = L-glutaminyl-tRNA(Gln) + L-glutamate + ADP + phosphate + H(+). It catalyses the reaction L-aspartyl-tRNA(Asn) + L-glutamine + ATP + H2O = L-asparaginyl-tRNA(Asn) + L-glutamate + ADP + phosphate + 2 H(+). Functionally, allows the formation of correctly charged Asn-tRNA(Asn) or Gln-tRNA(Gln) through the transamidation of misacylated Asp-tRNA(Asn) or Glu-tRNA(Gln) in organisms which lack either or both of asparaginyl-tRNA or glutaminyl-tRNA synthetases. The reaction takes place in the presence of glutamine and ATP through an activated phospho-Asp-tRNA(Asn) or phospho-Glu-tRNA(Gln). In Roseobacter denitrificans (strain ATCC 33942 / OCh 114) (Erythrobacter sp. (strain OCh 114)), this protein is Aspartyl/glutamyl-tRNA(Asn/Gln) amidotransferase subunit B.